The following is a 280-amino-acid chain: Polyamine aminopropyltransferase (280 aa).

The 235-residue stretch at 3–237 folds into the PABS domain; the sequence is DVYFMERDPY…YWWSFSVGSK (235 aa). Q33 contributes to the S-methyl-5'-thioadenosine binding site. Spermidine is bound by residues H64 and D88. S-methyl-5'-thioadenosine is bound by residues D108 and 139–140; that span reads DG. D157 functions as the Proton acceptor in the catalytic mechanism. 157–160 is a binding site for spermidine; it reads DSTD.

This sequence belongs to the spermidine/spermine synthase family. In terms of assembly, homodimer or homotetramer.

It localises to the cytoplasm. It catalyses the reaction S-adenosyl 3-(methylsulfanyl)propylamine + putrescine = S-methyl-5'-thioadenosine + spermidine + H(+). It functions in the pathway amine and polyamine biosynthesis; spermidine biosynthesis; spermidine from putrescine: step 1/1. Catalyzes the irreversible transfer of a propylamine group from the amino donor S-adenosylmethioninamine (decarboxy-AdoMet) to putrescine (1,4-diaminobutane) to yield spermidine. In Hydrogenobaculum sp. (strain Y04AAS1), this protein is Polyamine aminopropyltransferase.